The sequence spans 21 residues: Fibrinogen beta chain (21 aa).

Glutamine 1 carries the post-translational modification Pyrrolidone carboxylic acid. Residues 1-11 (QFPTDYDEGED) show a composition bias toward acidic residues. The tract at residues 1 to 21 (QFPTDYDEGEDDRPKSGLGAR) is disordered. An O-linked (GalNAc...) threonine glycan is attached at threonine 4. Tyrosine 6 carries the post-translational modification Sulfotyrosine.

In terms of assembly, heterohexamer; disulfide linked. Contains 2 sets of 3 non-identical chains (alpha, beta and gamma). The 2 heterotrimers are in head to head conformation with the N-termini in a small central domain. In terms of processing, conversion of fibrinogen to fibrin is triggered by thrombin, which cleaves fibrinopeptides A and B from alpha and beta chains, and thus exposes the N-terminal polymerization sites responsible for the formation of the soft clot.

It localises to the secreted. Cleaved by the protease thrombin to yield monomers which, together with fibrinogen alpha (FGA) and fibrinogen gamma (FGG), polymerize to form an insoluble fibrin matrix. Fibrin has a major function in hemostasis as one of the primary components of blood clots. In addition, functions during the early stages of wound repair to stabilize the lesion and guide cell migration during re-epithelialization. Was originally thought to be essential for platelet aggregation, based on in vitro studies using anticoagulated blood. However subsequent studies have shown that it is not absolutely required for thrombus formation in vivo. Enhances expression of SELP in activated platelets. Maternal fibrinogen is essential for successful pregnancy. Fibrin deposition is also associated with infection, where it protects against IFNG-mediated hemorrhage. May also facilitate the antibacterial immune response via both innate and T-cell mediated pathways. In Syncerus caffer (African buffalo), this protein is Fibrinogen beta chain (FGB).